The chain runs to 260 residues: RxLR effector protein BLR38 (260 aa).

The N-terminal stretch at 1-18 is a signal peptide; sequence MHCTVFFLLIACAKSSYG. Residues 46–49 carry the RxLR motif; sequence RLLR. The short motif at 136–148 is the Nuclear localuization signal (NLS) element; it reads MPSSRKRPRALDE.

Belongs to the RxLR effector family.

The protein resides in the secreted. The protein localises to the host nucleus. Its function is as follows. Secreted effector that triggers a robust hypersensitive response (HR) in Lactuca serriola LS102. The response to BLN06 was visible as strong necrosis. Although effector recognition is frequently associated with single dominant R gene loci, the recognition of BLR38 requires 2 unlinked loci that display incomplete dominance. The chain is RxLR effector protein BLR38 from Bremia lactucae (Lettuce downy mildew).